Consider the following 497-residue polypeptide: GTPase-activating protein GYP8 (497 aa).

One can recognise a Rab-GAP TBC domain in the interval 69–281 (FVNNSLRKDC…QIFDMTISMQ (213 aa)).

This chain is GTPase-activating protein GYP8 (GYP8), found in Saccharomyces cerevisiae (strain ATCC 204508 / S288c) (Baker's yeast).